A 91-amino-acid polypeptide reads, in one-letter code: Small ribosomal subunit protein uS19 (91 aa).

This sequence belongs to the universal ribosomal protein uS19 family.

In terms of biological role, protein S19 forms a complex with S13 that binds strongly to the 16S ribosomal RNA. The chain is Small ribosomal subunit protein uS19 from Exiguobacterium sp. (strain ATCC BAA-1283 / AT1b).